A 425-amino-acid chain; its full sequence is Tyrosine--tRNA ligase (425 aa).

Tyrosine 37 provides a ligand contact to L-tyrosine. The 'HIGH' region signature appears at 42 to 51; it reads PTADSLHLGH. L-tyrosine is bound by residues tyrosine 175 and glutamine 179. Residues 235–239 carry the 'KMSKS' region motif; the sequence is KFGKT. Lysine 238 lines the ATP pocket. The 58-residue stretch at 357–414 folds into the S4 RNA-binding domain; it reads ADLQQALVSAELVPSRGQARTMISSNAVTINGEKQANPEYIFSASDRLFDRYTLLRRG.

The protein belongs to the class-I aminoacyl-tRNA synthetase family. TyrS type 1 subfamily. As to quaternary structure, homodimer.

The protein resides in the cytoplasm. It catalyses the reaction tRNA(Tyr) + L-tyrosine + ATP = L-tyrosyl-tRNA(Tyr) + AMP + diphosphate + H(+). Functionally, catalyzes the attachment of tyrosine to tRNA(Tyr) in a two-step reaction: tyrosine is first activated by ATP to form Tyr-AMP and then transferred to the acceptor end of tRNA(Tyr). The sequence is that of Tyrosine--tRNA ligase from Pectobacterium atrosepticum (strain SCRI 1043 / ATCC BAA-672) (Erwinia carotovora subsp. atroseptica).